The primary structure comprises 271 residues: Phosphatidylglycerol--prolipoprotein diacylglyceryl transferase (271 aa).

A run of 4 helical transmembrane segments spans residues 25–45 (WYGI…KFFV), 60–80 (YFIW…ILIY), 103–123 (FVGI…IATL), and 131–151 (ANPW…YVFG). Arg152 is an a 1,2-diacyl-sn-glycero-3-phospho-(1'-sn-glycerol) binding site. 3 helical membrane passes run 181–201 (PSQL…VYLA), 209–229 (GELI…CEFY), and 235–255 (GIGF…IMFI).

This sequence belongs to the Lgt family.

It localises to the cell inner membrane. The enzyme catalyses L-cysteinyl-[prolipoprotein] + a 1,2-diacyl-sn-glycero-3-phospho-(1'-sn-glycerol) = an S-1,2-diacyl-sn-glyceryl-L-cysteinyl-[prolipoprotein] + sn-glycerol 1-phosphate + H(+). It participates in protein modification; lipoprotein biosynthesis (diacylglyceryl transfer). Functionally, catalyzes the transfer of the diacylglyceryl group from phosphatidylglycerol to the sulfhydryl group of the N-terminal cysteine of a prolipoprotein, the first step in the formation of mature lipoproteins. This is Phosphatidylglycerol--prolipoprotein diacylglyceryl transferase from Campylobacter jejuni (strain RM1221).